We begin with the raw amino-acid sequence, 184 residues long: Large ribosomal subunit protein uL6 (184 aa).

This sequence belongs to the universal ribosomal protein uL6 family. Part of the 50S ribosomal subunit.

In terms of biological role, this protein binds to the 23S rRNA, and is important in its secondary structure. It is located near the subunit interface in the base of the L7/L12 stalk, and near the tRNA binding site of the peptidyltransferase center. In Fervidobacterium nodosum (strain ATCC 35602 / DSM 5306 / Rt17-B1), this protein is Large ribosomal subunit protein uL6.